A 522-amino-acid polypeptide reads, in one-letter code: Glucose-6-phosphate isomerase (522 aa).

Catalysis depends on Glu-351, which acts as the Proton donor. Residues His-382 and Lys-491 contribute to the active site.

The protein belongs to the GPI family.

It is found in the cytoplasm. It carries out the reaction alpha-D-glucose 6-phosphate = beta-D-fructose 6-phosphate. It participates in carbohydrate biosynthesis; gluconeogenesis. It functions in the pathway carbohydrate degradation; glycolysis; D-glyceraldehyde 3-phosphate and glycerone phosphate from D-glucose: step 2/4. Its function is as follows. Catalyzes the reversible isomerization of glucose-6-phosphate to fructose-6-phosphate. The polypeptide is Glucose-6-phosphate isomerase (Albidiferax ferrireducens (strain ATCC BAA-621 / DSM 15236 / T118) (Rhodoferax ferrireducens)).